We begin with the raw amino-acid sequence, 784 residues long: Protein DBF4 homolog B (784 aa).

The region spanning cysteine 27–valine 117 is the BRCT domain. The segment at threonine 222–glutamine 243 is disordered. Residues alanine 244 to aspartate 293 form a DBF4-type zinc finger. Zn(2+) is bound by residues cysteine 251, cysteine 254, histidine 264, and histidine 270. Disordered regions lie at residues phenylalanine 299–glycine 332, histidine 348–proline 368, and threonine 495–alanine 529. Residues serine 498–alanine 507 show a composition bias toward polar residues.

Forms a complex with cdc7. Phosphorylated. Stably phosphorylated throughout the cell cycle.

It is found in the nucleus. In terms of biological role, regulatory subunit for cdc7 which activates its kinase activity thereby playing a central role in DNA replication and cell proliferation. Specifically required during the initiation of DNA replication in egg and during early embryonic development. The complex cdc7-dbf4b phosphorylates mcm2 and mcm4 subunits and is required for cdc45 loading. In Xenopus laevis (African clawed frog), this protein is Protein DBF4 homolog B (dbf4b).